Reading from the N-terminus, the 433-residue chain is Deoxyguanosinetriphosphate triphosphohydrolase-like protein 2 (433 aa).

Positions 61–248 (RLTHSLEVAQ…METADDIAYT (188 aa)) constitute an HD domain.

Belongs to the dGTPase family. Type 2 subfamily.

This is Deoxyguanosinetriphosphate triphosphohydrolase-like protein 2 from Deinococcus radiodurans (strain ATCC 13939 / DSM 20539 / JCM 16871 / CCUG 27074 / LMG 4051 / NBRC 15346 / NCIMB 9279 / VKM B-1422 / R1).